A 76-amino-acid chain; its full sequence is MSVLGQQAAIGIVVHLIFIAVTWWALQAVNIDPLIKKGKVVQARLLMILLTIAIGTAVANFFLDYLNYSQQLPYLF.

2 helical membrane passes run 9–29 (AIGI…LQAV) and 45–65 (LLMI…FLDY).

It localises to the cell membrane. This is an uncharacterized protein from Bacillus subtilis (strain 168).